Consider the following 512-residue polypeptide: Kelch repeat protein C2 (512 aa).

Positions 2–67 (ESVIFSINGE…MRWKKINITI (66 aa)) constitute a BTB domain. The region spanning 102 to 176 (CIRMFNFSKR…LLKWIHKNPN (75 aa)) is the BACK domain. Kelch repeat units lie at residues 216 to 261 (IKHN…LHNC), 262 to 307 (LYII…VNNG), 309 to 354 (LYVI…FVND), 356 to 403 (IYVM…EYDG), 405 to 449 (IYVI…SCGD), and 452 to 498 (LIIA…THKS).

Belongs to the poxviruses Kelch family.

The polypeptide is Kelch repeat protein C2 (Rabbitpox virus (strain Utrecht) (RPV)).